The chain runs to 149 residues: Probable glycine cleavage system H protein 2 (149 aa).

A Lipoyl-binding domain is found at 32-114; sequence IAVVGITDLA…YGQGWIAKIK (83 aa). Residue Lys-73 is modified to N6-lipoyllysine.

The protein belongs to the GcvH family. As to quaternary structure, the glycine cleavage system is composed of four proteins: P, T, L and H. (R)-lipoate is required as a cofactor.

In terms of biological role, the glycine cleavage system catalyzes the degradation of glycine. The H protein shuttles the methylamine group of glycine from the P protein to the T protein. In Sulfolobus acidocaldarius (strain ATCC 33909 / DSM 639 / JCM 8929 / NBRC 15157 / NCIMB 11770), this protein is Probable glycine cleavage system H protein 2.